The primary structure comprises 420 residues: MAATDVDIFSNEEKRNLSLGGHVGFDSLPDQLVSKSVTQGFCFNILCVGETGIGKSTLMNTLFNTMFENEEASHYQNGVYLRPRTYDLQESNVHLKLTIVDTVGFGDQINKEESYKPIVDYIDTQFENYLQEELKVKRSLFNYHDTRIHICLYFISPTGHSLKSLDLVTMKKLDSKVNIIPIIAKADTISKSELHKFKIKIMSELVSNGVQIYQFPTDDEAVTEINSSMNAHLPFAVVGSVEEVKVGNKTVRARQYPWGVVQVENESHCDFVKLREMLIRVNMEDLREQTHARHYELYRRCKLEEMGFKDTDPDSQPFSLQETYEAKRKEFLGDLQKKEEEMRQMFVNKVKETEAELKEKERELHEKFEQLKRMHQEEKRKVEEKRRELEEEMNAFNRRKVAAETLSLSQPLKKDKDKKN.

In terms of domain architecture, Septin-type G spans 39 to 305; sequence QGFCFNILCV…ELYRRCKLEE (267 aa). The segment at 49–56 is G1 motif; it reads GETGIGKS. GTP is bound by residues 49-56, Gly-104, 185-193, Gly-239, and Arg-254; these read GETGIGKS and KADTISKSE. The tract at residues 101–104 is G3 motif; sequence DTVG. The segment at 184–187 is G4 motif; it reads AKAD. A coiled-coil region spans residues 321–407; the sequence is QETYEAKRKE…RRKVAAETLS (87 aa). Residues 393–420 are disordered; it reads MNAFNRRKVAAETLSLSQPLKKDKDKKN.

The protein belongs to the TRAFAC class TrmE-Era-EngA-EngB-Septin-like GTPase superfamily. Septin GTPase family.

This chain is Septin-8-A (sept8a), found in Danio rerio (Zebrafish).